A 38-amino-acid polypeptide reads, in one-letter code: Mu-agatoxin-Hc1c (38 aa).

4 disulfides stabilise this stretch: Cys-3–Cys-19, Cys-10–Cys-24, Cys-18–Cys-34, and Cys-26–Cys-32. Ser-38 is subject to Serine amide.

This sequence belongs to the neurotoxin 07 (Beta/delta-agtx) family. 02 (aga-3) subfamily. As to expression, expressed by the venom gland.

Its subcellular location is the secreted. Insecticidal neurotoxin that induces irreversible neuromuscular blockade in house crickets (A.domesticus). Modifies presynaptic voltage-gated sodium channels (Nav), causing them to open at the normal resting potential of the nerve. This leads to spontaneous release of neurotransmitter and repetitive action potentials in motor neurons. This Hololena curta (Funnel-web spider) protein is Mu-agatoxin-Hc1c.